The sequence spans 417 residues: Squalene synthase (417 aa).

Arginine 52 and arginine 77 together coordinate NADP(+). Residues aspartate 80, glutamate 83, and aspartate 84 each coordinate Mg(2+). NADP(+) is bound at residue arginine 218. The chain crosses the membrane as a helical span at residues 284 to 304 (SVFNFCAIPQVMAIATLAACY). Residues lysine 315 and arginine 317 each coordinate NADP(+). The helical transmembrane segment at 384–404 (PIYLSFVMLLAALSWQYLTTL) threads the bilayer.

It belongs to the phytoene/squalene synthase family. Requires Mg(2+) as cofactor. In terms of tissue distribution, widely expressed.

It is found in the endoplasmic reticulum membrane. It carries out the reaction 2 (2E,6E)-farnesyl diphosphate + NADPH + H(+) = squalene + 2 diphosphate + NADP(+). The enzyme catalyses 2 (2E,6E)-farnesyl diphosphate + NADH + H(+) = squalene + 2 diphosphate + NAD(+). It catalyses the reaction 2 (2E,6E)-farnesyl diphosphate = presqualene diphosphate + diphosphate. The catalysed reaction is presqualene diphosphate + NADH + H(+) = squalene + diphosphate + NAD(+). It carries out the reaction presqualene diphosphate + NADPH + H(+) = squalene + diphosphate + NADP(+). It participates in terpene metabolism; lanosterol biosynthesis; lanosterol from farnesyl diphosphate: step 1/3. Catalyzes the condensation of 2 farnesyl pyrophosphate (FPP) moieties to form squalene. Proceeds in two distinct steps. In the first half-reaction, two molecules of FPP react to form the stable presqualene diphosphate intermediate (PSQPP), with concomitant release of a proton and a molecule of inorganic diphosphate. In the second half-reaction, PSQPP undergoes heterolysis, isomerization, and reduction with NADPH or NADH to form squalene. It is the first committed enzyme of the sterol biosynthesis pathway. This chain is Squalene synthase (FDFT1), found in Homo sapiens (Human).